A 193-amino-acid chain; its full sequence is Thioredoxin reductase-like selenoprotein T1a (193 aa).

Residues 1-21 (MRWLPFSALLLWALCLHSASA) form the signal peptide. Residues 44–47 (CVSU) constitute a cross-link (cysteinyl-selenocysteine (Cys-Sec)). Selenocysteine 47 is a non-standard amino acid (selenocysteine). The chain crosses the membrane as a helical span at residues 83–101 (IASFLSMFKLLLIGVIILG).

This sequence belongs to the SelWTH family. Selenoprotein T subfamily. Post-translationally, may contain a selenide-sulfide bond between Cys-44 and Sec-47. This bond is speculated to serve as redox-active pair. In terms of tissue distribution, expressed in embryonic olfactory vesicles and the photoreceptor cell layer of the embryonic retina. Low level in embryonic epiphysis.

It is found in the endoplasmic reticulum membrane. It carries out the reaction [thioredoxin]-dithiol + NADP(+) = [thioredoxin]-disulfide + NADPH + H(+). Its function is as follows. Selenoprotein with thioredoxin reductase-like oxidoreductase activity. The sequence is that of Thioredoxin reductase-like selenoprotein T1a from Danio rerio (Zebrafish).